A 275-amino-acid chain; its full sequence is Arylamine N-acetyltransferase (275 aa).

The active-site Acyl-thioester intermediate is the Cys-70. Catalysis depends on residues His-110 and Asp-127.

The protein belongs to the arylamine N-acetyltransferase family. As to quaternary structure, homodimer and homotetramer.

It catalyses the reaction an arylamine + acetyl-CoA = an N-acetylarylamine + CoA. In terms of biological role, catalyzes the transfer of the acetyl group from acetyl coenzyme A to the free amino group of arylamines and hydrazines. Substrates include isoniazid, anisidine, and 4-aminoveratrole, and to a much lesser extent, p-aminobenzoic acid. This chain is Arylamine N-acetyltransferase, found in Mycolicibacterium smegmatis (Mycobacterium smegmatis).